The sequence spans 431 residues: Na(+)-translocating NADH-quinone reductase subunit F (431 aa).

Residues 9 to 29 form a helical membrane-spanning segment; it reads FICIASLIFCAIGVILAGVIL. In terms of domain architecture, 2Fe-2S ferredoxin-type spans 39–133; sequence HPCKLKINDN…DMSLEIEERY (95 aa). Residues Cys-76, Cys-82, Cys-85, and Cys-117 each coordinate [2Fe-2S] cluster. Residues 136–286 enclose the FAD-binding FR-type domain; that stretch reads ASSWEGTVIS…SGPYGESFMK (151 aa). Residues 289 to 413 are catalytic; the sequence is DRPLIFLIGG…PLHNSSILKL (125 aa).

Belongs to the NqrF family. Composed of six subunits; NqrA, NqrB, NqrC, NqrD, NqrE and NqrF. [2Fe-2S] cluster is required as a cofactor. The cofactor is FAD.

It localises to the cell inner membrane. The enzyme catalyses a ubiquinone + n Na(+)(in) + NADH + H(+) = a ubiquinol + n Na(+)(out) + NAD(+). NQR complex catalyzes the reduction of ubiquinone-1 to ubiquinol by two successive reactions, coupled with the transport of Na(+) ions from the cytoplasm to the periplasm. The first step is catalyzed by NqrF, which accepts electrons from NADH and reduces ubiquinone-1 to ubisemiquinone by a one-electron transfer pathway. The chain is Na(+)-translocating NADH-quinone reductase subunit F from Chlamydia pneumoniae (Chlamydophila pneumoniae).